The sequence spans 522 residues: MSQDLQKEVASRKTFAIISHPDAGKTTITEQLLLFGGVIRSAGTVKGKKSGKFATSDWMEIEKQRGISVTSSVMQFDYNGSRINILDTPGHSDFSEDTYRTLMAVDSAVMVIDAAKGIEAQTLKLFKVCRMRGIPIFTFINKMDRQGKMPLELLAELEEVLGIESYPMNWPIGMGKELAGLYDRYHRVIEQYRSEEDERFLPLGEDGDLKEAHAIQKSLYYDQALEEIMLLDEAGNDFSRERIIAGEQTPVFFGSALTNFGVETFLRTFVDFAPSPSSHESNEGVIEADNPKFSGFIFKIQANMNPAHRDRIAFIRICSGEFERGMNVTLTRTGKSMKLANSTQFMADDRETVNRAVAGDIIGLYDTGNYQIGDTITNGSKKLEFEKLPQFTPELFMRVYAKNVMKQKHFHKGVEQLVQEGAIQLFKTWRTEEYIIGAVGQLQFEVFEHRMRGEYNSEIRMEPIGKKIARWVKEEDADEKLSTARSMLVKDRFDQPLFLFENEFAINWFNDKNPDIELTSLL.

The region spanning 10–277 (ASRKTFAIIS…TFVDFAPSPS (268 aa)) is the tr-type G domain. GTP-binding positions include 19–26 (SHPDAGKT), 87–91 (DTPGH), and 141–144 (NKMD).

This sequence belongs to the TRAFAC class translation factor GTPase superfamily. Classic translation factor GTPase family. PrfC subfamily.

The protein resides in the cytoplasm. Functionally, increases the formation of ribosomal termination complexes and stimulates activities of RF-1 and RF-2. It binds guanine nucleotides and has strong preference for UGA stop codons. It may interact directly with the ribosome. The stimulation of RF-1 and RF-2 is significantly reduced by GTP and GDP, but not by GMP. The protein is Peptide chain release factor 3 of Listeria monocytogenes serotype 4b (strain F2365).